Consider the following 156-residue polypeptide: MPRKGPVTRRDVLPDPIHNSKLVTRLINRLMLDGKRGVAQNILYNAFDIIQERTGRNPMEVFEEALKNVMPVLEVKARRVGGANYQVPIEVKPERRTTLGLRWMVNYSRNRGEKTMEQRLANEIMDAANNTGAAVKKREDTHKMAEANKAFAHYRW.

The protein belongs to the universal ribosomal protein uS7 family. In terms of assembly, part of the 30S ribosomal subunit. Contacts proteins S9 and S11.

Functionally, one of the primary rRNA binding proteins, it binds directly to 16S rRNA where it nucleates assembly of the head domain of the 30S subunit. Is located at the subunit interface close to the decoding center, probably blocks exit of the E-site tRNA. This Brevibacillus brevis (strain 47 / JCM 6285 / NBRC 100599) protein is Small ribosomal subunit protein uS7.